Reading from the N-terminus, the 145-residue chain is Small ribosomal subunit protein uS12A (145 aa).

At P64 the chain carries Hydroxyproline.

The protein belongs to the universal ribosomal protein uS12 family.

The chain is Small ribosomal subunit protein uS12A (RPS23A) from Naumovozyma castellii (Yeast).